We begin with the raw amino-acid sequence, 168 residues long: Small ribosomal subunit protein uS9 (168 aa).

Residues 1-38 (MAKIADSIDSAQADSVENVESYSTETPESAAPAAPRPV) are disordered. Over residues 9–22 (DSAQADSVENVESY) the composition is skewed to polar residues. The span at 23–37 (STETPESAAPAAPRP) shows a compositional bias: low complexity.

It belongs to the universal ribosomal protein uS9 family.

The polypeptide is Small ribosomal subunit protein uS9 (Leifsonia xyli subsp. xyli (strain CTCB07)).